Consider the following 288-residue polypeptide: ATP synthase gamma chain (288 aa).

Belongs to the ATPase gamma chain family. F-type ATPases have 2 components, CF(1) - the catalytic core - and CF(0) - the membrane proton channel. CF(1) has five subunits: alpha(3), beta(3), gamma(1), delta(1), epsilon(1). CF(0) has three main subunits: a, b and c.

It localises to the cell inner membrane. Produces ATP from ADP in the presence of a proton gradient across the membrane. The gamma chain is believed to be important in regulating ATPase activity and the flow of protons through the CF(0) complex. This Acidovorax ebreus (strain TPSY) (Diaphorobacter sp. (strain TPSY)) protein is ATP synthase gamma chain.